The chain runs to 207 residues: Large ribosomal subunit protein uL4 (207 aa).

Positions 45–78 (RQGTHKTKNRAEVSGGGRKPWRQKGTGRARQGSI) are disordered.

The protein belongs to the universal ribosomal protein uL4 family. In terms of assembly, part of the 50S ribosomal subunit.

In terms of biological role, one of the primary rRNA binding proteins, this protein initially binds near the 5'-end of the 23S rRNA. It is important during the early stages of 50S assembly. It makes multiple contacts with different domains of the 23S rRNA in the assembled 50S subunit and ribosome. Functionally, forms part of the polypeptide exit tunnel. The chain is Large ribosomal subunit protein uL4 from Geobacillus sp. (strain WCH70).